Reading from the N-terminus, the 388-residue chain is 3-oxo-tetronate kinase (388 aa).

ATP contacts are provided by residues Ser258 and 360–363; that span reads GGET.

This sequence belongs to the four-carbon acid sugar kinase family.

The enzyme catalyses 3-dehydro-L-erythronate + ATP = 3-dehydro-4-O-phospho-L-erythronate + ADP + H(+). It catalyses the reaction 3-dehydro-D-erythronate + ATP = 3-dehydro-4-O-phospho-D-erythronate + ADP + H(+). Its function is as follows. Catalyzes the ATP-dependent phosphorylation of 3-oxo-tetronate to 3-oxo-tetronate 4-phosphate. This Escherichia coli (strain K12) protein is 3-oxo-tetronate kinase.